A 1770-amino-acid chain; its full sequence is Transposon Ty2-DR2 Gag-Pol polyprotein (1770 aa).

2 stretches are compositionally biased toward polar residues: residues 1-39 (MESQ…SASN) and 49-60 (KVNSQEETTPGT). Disordered stretches follow at residues 1–89 (MESQ…QQHG) and 360–449 (HSEY…SNDE). The tract at residues 295–397 (ENNINVSDRL…SSKPRAAKAH (103 aa)) is RNA-binding. Low complexity predominate over residues 369–381 (TSPNTTNTKVTTR). 2 stretches are compositionally biased toward polar residues: residues 399–408 (IATSSKFSRV) and 415–435 (ESTV…GQQQ). Aspartate 457 (for protease activity; shared with dimeric partner) is an active-site residue. Residues 579 to 636 (NVNKSKSVNKYPYPLIHRMLGHANFRSIQKSLKKNAVTYLKESDIEWSNASTYQCPDC) are integrase-type zinc finger-like. In terms of domain architecture, Integrase catalytic spans 656-831 (ESYEPFQYLH…AGLDITTILP (176 aa)). Mg(2+) is bound by residues aspartate 667 and aspartate 732. 3 disordered regions span residues 1005–1038 (GGTI…MIDL), 1059–1135 (TEEP…KSSK), and 1171–1222 (SRQT…LEPP). Polar residues-rich tracts occupy residues 1009–1024 (ESDT…FTAR) and 1065–1082 (QRNS…STPS). Residues 1193 to 1227 (KKRSLEDNETEIEVSRDTWNNKNMRSLEPPRSKKR) carry the Bipartite nuclear localization signal motif. Positions 1353 to 1491 (NDYYITQLDI…DILGLEIKYQ (139 aa)) constitute a Reverse transcriptase Ty1/copia-type domain. Mg(2+) is bound by residues aspartate 1361, aspartate 1442, aspartate 1443, aspartate 1625, glutamate 1667, and aspartate 1700. The RNase H Ty1/copia-type domain occupies 1625 to 1767 (DASYGNQPYY…IKTFKLLTNK (143 aa)).

In terms of assembly, the capsid protein forms a homotrimer, from which the VLPs are assembled. The protease is a homodimer, whose active site consists of two apposed aspartic acid residues. Post-translationally, initially, virus-like particles (VLPs) are composed of the structural unprocessed proteins Gag and Gag-Pol, and also contain the host initiator methionine tRNA (tRNA(i)-Met) which serves as a primer for minus-strand DNA synthesis, and a dimer of genomic Ty RNA. Processing of the polyproteins occurs within the particle and proceeds by an ordered pathway, called maturation. First, the protease (PR) is released by autocatalytic cleavage of the Gag-Pol polyprotein, and this cleavage is a prerequisite for subsequent processing at the remaining sites to release the mature structural and catalytic proteins. Maturation takes place prior to the RT reaction and is required to produce transposition-competent VLPs.

Its subcellular location is the cytoplasm. The protein localises to the nucleus. The enzyme catalyses DNA(n) + a 2'-deoxyribonucleoside 5'-triphosphate = DNA(n+1) + diphosphate. It carries out the reaction Endonucleolytic cleavage to 5'-phosphomonoester.. Its function is as follows. Capsid protein (CA) is the structural component of the virus-like particle (VLP), forming the shell that encapsulates the retrotransposons dimeric RNA genome. The particles are assembled from trimer-clustered units and there are holes in the capsid shells that allow for the diffusion of macromolecules. CA also has nucleocapsid-like chaperone activity, promoting primer tRNA(i)-Met annealing to the multipartite primer-binding site (PBS), dimerization of Ty2 RNA and initiation of reverse transcription. The aspartyl protease (PR) mediates the proteolytic cleavages of the Gag and Gag-Pol polyproteins after assembly of the VLP. Functionally, reverse transcriptase/ribonuclease H (RT) is a multifunctional enzyme that catalyzes the conversion of the retro-elements RNA genome into dsDNA within the VLP. The enzyme displays a DNA polymerase activity that can copy either DNA or RNA templates, and a ribonuclease H (RNase H) activity that cleaves the RNA strand of RNA-DNA heteroduplexes during plus-strand synthesis and hydrolyzes RNA primers. The conversion leads to a linear dsDNA copy of the retrotransposon that includes long terminal repeats (LTRs) at both ends. In terms of biological role, integrase (IN) targets the VLP to the nucleus, where a subparticle preintegration complex (PIC) containing at least integrase and the newly synthesized dsDNA copy of the retrotransposon must transit the nuclear membrane. Once in the nucleus, integrase performs the integration of the dsDNA into the host genome. This is Transposon Ty2-DR2 Gag-Pol polyprotein (TY2B-DR2) from Saccharomyces cerevisiae (strain ATCC 204508 / S288c) (Baker's yeast).